The following is a 589-amino-acid chain: TAF5-like RNA polymerase II p300/CBP-associated factor-associated factor 65 kDa subunit 5L (589 aa).

The span at 211-221 (ASGSSSRSENN) shows a compositional bias: polar residues. Residues 211–230 (ASGSSSRSENNGLEPPDMPS) are disordered. 6 WD repeats span residues 266-305 (NTEQLLNTAEISPDSKLLAAGFDNSCIKLWSLRSKKLKSE), 340-379 (GHCGPVYSTRFLADSSGLLSCSEDMSIRYWDLGSFTNTVL), 382-421 (GHAYPVWDLDISPYSLYFASGSHDRTARLWSFDRTYPLRI), 424-463 (GHLADVDCVKFHPNSNYLATGSTDKTVRLWSAQQGNSVRL), 466-505 (GHRGPVLSLAFSPNGKYLASAGEDQRLKLWDLASGTLYKE), and 508-547 (GHTDNITSLTFSPDSGLIASASMDNSVRVWDIRNTYCSAP).

The protein belongs to the WD repeat TAF5 family. As to quaternary structure, the PCAF complex is composed of a number of TBP-associated factors (TAFS), such as TAF5, TAF5L, TAF6, TAF6L, TAF9, TAF10 and TAF12, PCAF, and also PCAF-associated factors (PAFs), such as TADA2L/ADA2, TADA3L/ADA3 and SPT3. Component of the STAGA transcription coactivator-HAT complex, at least composed of SUPT3H, GCN5L2, TAF5L, TAF6L, SUPT7L, TADA3L, TAD1L, TAF10, TAF12, TRRAP and TAF9.

It is found in the nucleus. Functionally, functions as a component of the PCAF complex. The PCAF complex is capable of efficiently acetylating histones in a nucleosomal context. The PCAF complex could be considered as the human version of the yeast SAGA complex. With TAF6L, acts as an epigenetic regulator essential for somatic reprogramming. Regulates target genes through H3K9ac deposition and MYC recruitment which trigger MYC regulatory network to orchestrate gene expression programs to control embryonic stem cell state. The protein is TAF5-like RNA polymerase II p300/CBP-associated factor-associated factor 65 kDa subunit 5L of Homo sapiens (Human).